The sequence spans 242 residues: Biosynthetic peptidoglycan transglycosylase (242 aa).

The helical transmembrane segment at 19–39 threads the bilayer; that stretch reads LMVVLAVFWGGGIALFSVAPV.

Belongs to the glycosyltransferase 51 family.

It localises to the cell inner membrane. The catalysed reaction is [GlcNAc-(1-&gt;4)-Mur2Ac(oyl-L-Ala-gamma-D-Glu-L-Lys-D-Ala-D-Ala)](n)-di-trans,octa-cis-undecaprenyl diphosphate + beta-D-GlcNAc-(1-&gt;4)-Mur2Ac(oyl-L-Ala-gamma-D-Glu-L-Lys-D-Ala-D-Ala)-di-trans,octa-cis-undecaprenyl diphosphate = [GlcNAc-(1-&gt;4)-Mur2Ac(oyl-L-Ala-gamma-D-Glu-L-Lys-D-Ala-D-Ala)](n+1)-di-trans,octa-cis-undecaprenyl diphosphate + di-trans,octa-cis-undecaprenyl diphosphate + H(+). It participates in cell wall biogenesis; peptidoglycan biosynthesis. In terms of biological role, peptidoglycan polymerase that catalyzes glycan chain elongation from lipid-linked precursors. This Escherichia coli O17:K52:H18 (strain UMN026 / ExPEC) protein is Biosynthetic peptidoglycan transglycosylase.